The chain runs to 163 residues: 5-hydroxymethyl-dUMP N-hydrolase (163 aa).

Ala-2 is subject to N-acetylalanine. Residue Gly-16 coordinates 5-hydroxymethyl-dUMP. Ser-17 carries the phosphoserine modification. 5-hydroxymethyl-dUMP contacts are provided by Ile-18, Arg-19, Gly-20, Ser-87, Gly-89, and Glu-93. Ser-87 bears the Phosphoserine mark. 4 positions are modified to phosphoserine: Ser-112, Ser-117, Ser-127, and Ser-158. Residue Ser-117 participates in 5-hydroxymethyl-dUMP binding.

In terms of assembly, monomer and homodimer. As to expression, highly expressed in heart, kidney, liver and spleen. Weakly expressed in lung and skeletal muscle.

Its subcellular location is the cytoplasm. The protein resides in the nucleus. The enzyme catalyses 5-hydroxymethyl-dUMP + H2O = 5-hydroxymethyluracil + 2-deoxy-D-ribose 5-phosphate. Functionally, part of a nucleotide salvage pathway that eliminates epigenetically modified 5-hydroxymethyl-dCMP (hmdCMP) in a two-step process entailing deamination to cytotoxic 5-hydroxymethyl-dUMP (hmdUMP), followed by its hydrolysis into 5-hydroxymethyluracil (hmU) and 2-deoxy-D-ribose 5-phosphate (deoxyribosephosphate). Catalyzes the second step in that pathway, the hydrolysis of the N-glycosidic bond in hmdUMP, degrading this cytotoxic nucleotide to avoid its genomic integration. The chain is 5-hydroxymethyl-dUMP N-hydrolase from Rattus norvegicus (Rat).